The chain runs to 538 residues: MTDLNKVVKELEALGIYDVKEVVYNPSYEQLFEEETKPGLEGFEKGTLTTTGAVAVDTGIFTGRSPKDKYIVLDEKTKDTVWWTSETAKNDNKPMNQATWQSLKDLVTNQLSRKRLFVVDGFCGASEHDRIAVRIVTEVAWQAHFVKNMFIRPTEEQLKNFEPDFVVMNGSKVTNPNWKEQGLNSENFVAFNLTERIQLIGGTWYGGEMKKGMFSMMNYFLPLKGVGAMHCSANVGKDGDVAIFFGLSGTGKTTLSTDPKRELIGDDEHGWDDVGIFNFEGGCYAKTIHLSEENEPDIYRAIRRDALLENVVVRSDGSVDFDDGSKTENTRVSYPIYHIDNIVKPVSRAGHATKVIFLTADAFGVLPPVSKLTPEQTKYYFLSGFTAKLAGTERGITEPTPTFSACFGAAFLTLHPTQYAEVLVKRMQAAGAEAYLVNTGWNGTGKRISIKDTRGIIDAILDGSIEKAEMGELPIFNLAIPKALPGVDSAILDPRDTYADKAQWQSKAEDLTGRFVKNFVKYATNEEGKALIAAGPKA.

Residues R64, Y205, and K211 each coordinate substrate. ATP-binding positions include K211, H230, and 246–254 (GLSGTGKTT). Mn(2+)-binding residues include K211 and H230. D267 is a Mn(2+) binding site. Residues E295, R331, 447-448 (RI), and T453 contribute to the ATP site. R331 contributes to the substrate binding site.

This sequence belongs to the phosphoenolpyruvate carboxykinase (ATP) family. In terms of assembly, monomer. The cofactor is Mn(2+).

The protein localises to the cytoplasm. It catalyses the reaction oxaloacetate + ATP = phosphoenolpyruvate + ADP + CO2. The protein operates within carbohydrate biosynthesis; gluconeogenesis. Its function is as follows. Involved in the gluconeogenesis. Catalyzes the conversion of oxaloacetate (OAA) to phosphoenolpyruvate (PEP) through direct phosphoryl transfer between the nucleoside triphosphate and OAA. The sequence is that of Phosphoenolpyruvate carboxykinase (ATP) from Haemophilus influenzae (strain PittGG).